A 161-amino-acid polypeptide reads, in one-letter code: Small heat shock protein hspJ (161 aa).

The region spanning 52–161 is the sHSP domain; it reads SKFTSLNPKL…FEKEIKINIE (110 aa).

The protein belongs to the small heat shock protein (HSP20) family.

The protein is Small heat shock protein hspJ (hspJ) of Dictyostelium discoideum (Social amoeba).